The following is a 273-amino-acid chain: Ribosomal RNA small subunit methyltransferase A (273 aa).

The S-adenosyl-L-methionine site is built by Asn18, Leu20, Gly45, Glu66, Asp91, and Asn113.

Belongs to the class I-like SAM-binding methyltransferase superfamily. rRNA adenine N(6)-methyltransferase family. RsmA subfamily.

The protein localises to the cytoplasm. It catalyses the reaction adenosine(1518)/adenosine(1519) in 16S rRNA + 4 S-adenosyl-L-methionine = N(6)-dimethyladenosine(1518)/N(6)-dimethyladenosine(1519) in 16S rRNA + 4 S-adenosyl-L-homocysteine + 4 H(+). In terms of biological role, specifically dimethylates two adjacent adenosines (A1518 and A1519) in the loop of a conserved hairpin near the 3'-end of 16S rRNA in the 30S particle. May play a critical role in biogenesis of 30S subunits. The protein is Ribosomal RNA small subunit methyltransferase A of Salmonella agona (strain SL483).